Reading from the N-terminus, the 448-residue chain is Probable glycine dehydrogenase (decarboxylating) subunit 1 (448 aa).

It belongs to the GcvP family. N-terminal subunit subfamily. In terms of assembly, the glycine cleavage system is composed of four proteins: P, T, L and H. In this organism, the P 'protein' is a heterodimer of two subunits.

The enzyme catalyses N(6)-[(R)-lipoyl]-L-lysyl-[glycine-cleavage complex H protein] + glycine + H(+) = N(6)-[(R)-S(8)-aminomethyldihydrolipoyl]-L-lysyl-[glycine-cleavage complex H protein] + CO2. The glycine cleavage system catalyzes the degradation of glycine. The P protein binds the alpha-amino group of glycine through its pyridoxal phosphate cofactor; CO(2) is released and the remaining methylamine moiety is then transferred to the lipoamide cofactor of the H protein. The polypeptide is Probable glycine dehydrogenase (decarboxylating) subunit 1 (Listeria welshimeri serovar 6b (strain ATCC 35897 / DSM 20650 / CCUG 15529 / CIP 8149 / NCTC 11857 / SLCC 5334 / V8)).